Consider the following 315-residue polypeptide: DNA-directed RNA polymerase subunit alpha (315 aa).

Positions 1-228 (MIEIEKPKVD…EHLNLFIDLT (228 aa)) are alpha N-terminal domain (alpha-NTD). The interval 245–315 (KEKVLEMTIE…LGLGLKPSEE (71 aa)) is alpha C-terminal domain (alpha-CTD).

This sequence belongs to the RNA polymerase alpha chain family. In terms of assembly, homodimer. The RNAP catalytic core consists of 2 alpha, 1 beta, 1 beta' and 1 omega subunit. When a sigma factor is associated with the core the holoenzyme is formed, which can initiate transcription.

It catalyses the reaction RNA(n) + a ribonucleoside 5'-triphosphate = RNA(n+1) + diphosphate. DNA-dependent RNA polymerase catalyzes the transcription of DNA into RNA using the four ribonucleoside triphosphates as substrates. This chain is DNA-directed RNA polymerase subunit alpha, found in Clostridioides difficile (strain 630) (Peptoclostridium difficile).